Consider the following 367-residue polypeptide: Uroporphyrinogen decarboxylase (367 aa).

M1 is subject to N-acetylmethionine. Residues R37, A39, R41, R50, D86, Y164, S219, and H339 each contribute to the coproporphyrinogen I site. R37, A39, and R41 together coordinate coproporphyrinogen III. Residues D86, Y164, S219, and H339 each contribute to the coproporphyrinogen III site.

Belongs to the uroporphyrinogen decarboxylase family. In terms of assembly, homodimer.

It localises to the cytoplasm. The protein localises to the cytosol. It carries out the reaction uroporphyrinogen III + 4 H(+) = coproporphyrinogen III + 4 CO2. It catalyses the reaction uroporphyrinogen I + 4 H(+) = coproporphyrinogen I + 4 CO2. The protein operates within porphyrin-containing compound metabolism; protoporphyrin-IX biosynthesis; coproporphyrinogen-III from 5-aminolevulinate: step 4/4. Catalyzes the sequential decarboxylation of the four acetate side chains of uroporphyrinogen to form coproporphyrinogen and participates in the fifth step in the heme biosynthetic pathway. Isomer I or isomer III of uroporphyrinogen may serve as substrate, but only coproporphyrinogen III can ultimately be converted to heme. In vitro also decarboxylates pentacarboxylate porphyrinogen I. This Ovis aries (Sheep) protein is Uroporphyrinogen decarboxylase.